Consider the following 248-residue polypeptide: Large ribosomal subunit protein uL4 (248 aa).

2 disordered regions span residues 48-95 (GTHK…GPVP) and 210-248 (AFSE…RTGA). Over residues 233–248 (DATKARSSRHDDRTGA) the composition is skewed to basic and acidic residues.

Belongs to the universal ribosomal protein uL4 family. Part of the 50S ribosomal subunit.

Functionally, one of the primary rRNA binding proteins, this protein initially binds near the 5'-end of the 23S rRNA. It is important during the early stages of 50S assembly. It makes multiple contacts with different domains of the 23S rRNA in the assembled 50S subunit and ribosome. In terms of biological role, forms part of the polypeptide exit tunnel. In Tropheryma whipplei (strain TW08/27) (Whipple's bacillus), this protein is Large ribosomal subunit protein uL4.